Here is a 308-residue protein sequence, read N- to C-terminus: UDP-N-acetylenolpyruvoylglucosamine reductase (308 aa).

The FAD-binding PCMH-type domain occupies 37–201; that stretch reads RVGGPAQVLF…TQATFRGTPG (165 aa). R181 is a catalytic residue. Over residues 216-233 the composition is skewed to polar residues; sequence SREATQPIKSRTGGSTFK. A disordered region spans residues 216-236; it reads SREATQPIKSRTGGSTFKNPP. Residue S230 is the Proton donor of the active site. E300 is a catalytic residue.

Belongs to the MurB family. FAD serves as cofactor.

It localises to the cytoplasm. It catalyses the reaction UDP-N-acetyl-alpha-D-muramate + NADP(+) = UDP-N-acetyl-3-O-(1-carboxyvinyl)-alpha-D-glucosamine + NADPH + H(+). The protein operates within cell wall biogenesis; peptidoglycan biosynthesis. Its function is as follows. Cell wall formation. This chain is UDP-N-acetylenolpyruvoylglucosamine reductase, found in Azorhizobium caulinodans (strain ATCC 43989 / DSM 5975 / JCM 20966 / LMG 6465 / NBRC 14845 / NCIMB 13405 / ORS 571).